Reading from the N-terminus, the 188-residue chain is Surfactant protein C (188 aa).

A propeptide spanning residues Met-1–Arg-23 is cleaved from the precursor. S-palmitoyl cysteine attachment occurs at residues Cys-28 and Cys-29. Positions His-59–Ile-188 are excised as a propeptide. One can recognise a BRICHOS domain in the interval Phe-94–Ile-188. A disulfide bond links Cys-121 and Cys-180. Residues Asn-144–Ser-164 form a disordered region.

The protein localises to the secreted. It localises to the extracellular space. The protein resides in the surface film. Its function is as follows. Pulmonary surfactant associated proteins promote alveolar stability by lowering the surface tension at the air-liquid interface in the peripheral air spaces. The polypeptide is Surfactant protein C (SFTPC) (Oryctolagus cuniculus (Rabbit)).